Here is a 291-residue protein sequence, read N- to C-terminus: Ribosomal RNA small subunit methyltransferase A (291 aa).

Residues His37, Leu39, Gly64, Glu85, Asp110, and Asn131 each coordinate S-adenosyl-L-methionine.

This sequence belongs to the class I-like SAM-binding methyltransferase superfamily. rRNA adenine N(6)-methyltransferase family. RsmA subfamily.

It localises to the cytoplasm. The catalysed reaction is adenosine(1518)/adenosine(1519) in 16S rRNA + 4 S-adenosyl-L-methionine = N(6)-dimethyladenosine(1518)/N(6)-dimethyladenosine(1519) in 16S rRNA + 4 S-adenosyl-L-homocysteine + 4 H(+). Functionally, specifically dimethylates two adjacent adenosines (A1518 and A1519) in the loop of a conserved hairpin near the 3'-end of 16S rRNA in the 30S particle. May play a critical role in biogenesis of 30S subunits. In Dehalococcoides mccartyi (strain CBDB1), this protein is Ribosomal RNA small subunit methyltransferase A.